The sequence spans 532 residues: 2-isopropylmalate synthase (532 aa).

The 263-residue stretch at Val5–Tyr267 folds into the Pyruvate carboxyltransferase domain. Asp14, His202, His204, and Asn238 together coordinate Mn(2+). Residues His392–Val532 are regulatory domain. A disordered region spans residues Gln513 to Val532.

The protein belongs to the alpha-IPM synthase/homocitrate synthase family. LeuA type 1 subfamily. In terms of assembly, homodimer. Mn(2+) serves as cofactor.

The protein resides in the cytoplasm. It catalyses the reaction 3-methyl-2-oxobutanoate + acetyl-CoA + H2O = (2S)-2-isopropylmalate + CoA + H(+). It participates in amino-acid biosynthesis; L-leucine biosynthesis; L-leucine from 3-methyl-2-oxobutanoate: step 1/4. Its function is as follows. Catalyzes the condensation of the acetyl group of acetyl-CoA with 3-methyl-2-oxobutanoate (2-ketoisovalerate) to form 3-carboxy-3-hydroxy-4-methylpentanoate (2-isopropylmalate). The protein is 2-isopropylmalate synthase of Pectobacterium atrosepticum (strain SCRI 1043 / ATCC BAA-672) (Erwinia carotovora subsp. atroseptica).